Consider the following 342-residue polypeptide: Phosphate acyltransferase (342 aa).

It belongs to the PlsX family. As to quaternary structure, homodimer. Probably interacts with PlsY.

The protein localises to the cytoplasm. The catalysed reaction is a fatty acyl-[ACP] + phosphate = an acyl phosphate + holo-[ACP]. The protein operates within lipid metabolism; phospholipid metabolism. Its function is as follows. Catalyzes the reversible formation of acyl-phosphate (acyl-PO(4)) from acyl-[acyl-carrier-protein] (acyl-ACP). This enzyme utilizes acyl-ACP as fatty acyl donor, but not acyl-CoA. This is Phosphate acyltransferase from Shewanella baltica (strain OS155 / ATCC BAA-1091).